The primary structure comprises 224 residues: uncharacterized protein (224 aa).

The 60-residue stretch at 9-68 (SKMVDVNEITKYLPGFNCGACGYKRCDLFAEALLNKDVKLEDCPFLLRERFKENYEKLKE) folds into the 4Fe-4S domain. Residues C26, C29, C34, and C51 each contribute to the [4Fe-4S] cluster site.

The cofactor is [4Fe-4S] cluster.

This is an uncharacterized protein from Methanocaldococcus jannaschii (strain ATCC 43067 / DSM 2661 / JAL-1 / JCM 10045 / NBRC 100440) (Methanococcus jannaschii).